Consider the following 992-residue polypeptide: Tubulin glycylase 3A (992 aa).

Disordered regions lie at residues 1–54 (MQTR…NRVV) and 68–113 (QSDS…LGAP). Positions 7–26 (SEPHRSRDQVTDGDRNRDQP) are enriched in basic and acidic residues. Residues 39–49 (VTPPAAPPPTP) show a composition bias toward pro residues. A TTL domain is found at 295 to 645 (FKLTACVAFL…RRTDPKAELG (351 aa)). ATP-binding positions include 457–460 (QKYI), lysine 470, and aspartate 472. 2 disordered regions span residues 746-766 (SLCS…TATP) and 791-828 (KRNT…PVES). The segment covering 794–807 (TGGSLSGEQVQSTA) has biased composition (polar residues).

The protein localises to the cytoplasm. Its subcellular location is the cytoskeleton. Its function is as follows. Polylycylase which modifies alpha- and beta-tubulin, generating side chains of glycine on the gamma-carboxyl groups of specific glutamate residues within the C-terminal tail of alpha- and beta-tubulin. Involved both in the side-chain initiation and elongation steps of the polyglycylation reaction by adding a single glycine chain to generate monoglycine side chains and by elongating monoglycine side chains to polyglycine side chains. The sequence is that of Tubulin glycylase 3A (TTLL3A) from Drosophila melanogaster (Fruit fly).